A 158-amino-acid chain; its full sequence is NADH-quinone oxidoreductase subunit B (158 aa).

Positions 37, 38, 102, and 132 each coordinate [4Fe-4S] cluster.

It belongs to the complex I 20 kDa subunit family. NDH-1 is composed of 14 different subunits. Subunits NuoB, C, D, E, F, and G constitute the peripheral sector of the complex. Requires [4Fe-4S] cluster as cofactor.

The protein localises to the cell inner membrane. It carries out the reaction a quinone + NADH + 5 H(+)(in) = a quinol + NAD(+) + 4 H(+)(out). In terms of biological role, NDH-1 shuttles electrons from NADH, via FMN and iron-sulfur (Fe-S) centers, to quinones in the respiratory chain. The immediate electron acceptor for the enzyme in this species is believed to be ubiquinone. Couples the redox reaction to proton translocation (for every two electrons transferred, four hydrogen ions are translocated across the cytoplasmic membrane), and thus conserves the redox energy in a proton gradient. In Halorhodospira halophila (strain DSM 244 / SL1) (Ectothiorhodospira halophila (strain DSM 244 / SL1)), this protein is NADH-quinone oxidoreductase subunit B.